Reading from the N-terminus, the 180-residue chain is ATP-dependent protease subunit HslV (180 aa).

Threonine 6 is an active-site residue. The Na(+) site is built by alanine 164, cysteine 167, and threonine 170.

The protein belongs to the peptidase T1B family. HslV subfamily. As to quaternary structure, a double ring-shaped homohexamer of HslV is capped on each side by a ring-shaped HslU homohexamer. The assembly of the HslU/HslV complex is dependent on binding of ATP.

It localises to the cytoplasm. It catalyses the reaction ATP-dependent cleavage of peptide bonds with broad specificity.. With respect to regulation, allosterically activated by HslU binding. Its function is as follows. Protease subunit of a proteasome-like degradation complex believed to be a general protein degrading machinery. This chain is ATP-dependent protease subunit HslV, found in Borrelia hermsii (strain HS1 / DAH).